The chain runs to 860 residues: GAS2-like protein 2 (860 aa).

A compositionally biased stretch (basic residues) spans 1 to 12 (MSQHVGHGRRPR). Positions 1–22 (MSQHVGHGRRPRTPGPPVRSIR) are disordered. The Calponin-homology (CH) domain occupies 32 to 159 (EAMKEDLAEW…CLLELGRRAW (128 aa)). The region spanning 201-273 (CHFHNLDQMV…HYLDKHDPCR (73 aa)) is the GAR domain. Disordered stretches follow at residues 281–459 (PGSF…SLAS), 473–574 (QLSE…RHTS), 697–743 (TTVR…KGKR), 758–781 (KLRP…IPKP), and 801–860 (ATLG…ESWV). Residues 301–316 (GPSQPQPTMTISRSQS) show a composition bias toward polar residues. Over residues 347–364 (PPVRARTLREDPLPRSQE) the composition is skewed to basic and acidic residues. Polar residues-rich tracts occupy residues 365 to 393 (KPTP…STLS) and 473 to 485 (QLSE…SSSP). Residues 431–860 (QRLQIPEATS…PLSPEEESWV (430 aa)) form an interaction with ADORA2A and GNAS region. Positions 530–549 (NLDRSTHGHHSVEASGDHQT) are enriched in basic and acidic residues. Residues 724 to 733 (RSCSDPSSDK) are compositionally biased toward polar residues. Residues 758 to 768 (KLRPRIRPRRD) are compositionally biased toward basic residues. Over residues 828–840 (SNISLESSIQPAE) the composition is skewed to polar residues.

The protein belongs to the GAS2 family. In terms of assembly, interacts with ADORA2A (via its cytoplasmic C-terminal domain). Interacts with GNAS, GNAL, GNAQ, and GNA13. Interacts with MAPRE1. In terms of tissue distribution, expressed in tracheal epithelial cells (at protein level).

It localises to the cytoplasm. It is found in the cytoskeleton. Its subcellular location is the cell membrane. The protein localises to the stress fiber. The protein resides in the cilium basal body. In terms of biological role, involved in the cross-linking of microtubules and microfilaments. Regulates microtubule dynamics and stability by interacting with microtubule plus-end tracking proteins, such as MAPRE1, to regulate microtubule growth along actin stress fibers. Enhances ADORA2-mediated adenylyl cyclase activation by acting as a scaffold to recruit trimeric G-protein complexes to ADORA2A. Regulates ciliary orientation and performance in cells located in the airway. This is GAS2-like protein 2 (Gas2l2) from Mus musculus (Mouse).